The sequence spans 122 residues: U7 snRNA-associated Sm-like protein LSm10 (122 aa).

A Sm domain is found at 16–88 (SLIILLQGLQ…VRYVHIPDGV (73 aa)).

Belongs to the snRNP Sm proteins family. As to quaternary structure, component of the heptameric ring U7 snRNP complex, or U7 Sm protein core complex, at least composed of LSM10, LSM11, SNRPB, SNRPD3, SNRPE, SNRPF, SNRPG and U7 snRNA. Formation of the U7 snRNP is an ATP-dependent process mediated by a specialized SMN complex containing at least the Sm protein core complex and additionally, the U7-specific LSM10 and LSM11 proteins. Interacts with CLNS1A and SMN. Not methylated. Methylation is not necessary for interaction with SMN.

The protein resides in the nucleus. Functionally, appears to function in the U7 snRNP complex that is involved in histone 3'-end processing. Increases U7 snRNA levels but not histone 3'-end pre-mRNA processing activity, when overexpressed. Required for cell cycle progression from G1 to S phases. Binds specifically to U7 snRNA. Binds to the downstream cleavage product (DCP) of histone pre-mRNA. The protein is U7 snRNA-associated Sm-like protein LSm10 (Lsm10) of Mus musculus (Mouse).